The sequence spans 173 residues: RNA pyrophosphohydrolase (173 aa).

The region spanning 6–149 (GFRANVGIII…KRDVYRKVMK (144 aa)) is the Nudix hydrolase domain. The short motif at 38–59 (GGVDDGESAEEAMYRELYEEVG) is the Nudix box element.

Belongs to the Nudix hydrolase family. RppH subfamily. A divalent metal cation serves as cofactor.

In terms of biological role, accelerates the degradation of transcripts by removing pyrophosphate from the 5'-end of triphosphorylated RNA, leading to a more labile monophosphorylated state that can stimulate subsequent ribonuclease cleavage. The chain is RNA pyrophosphohydrolase from Shewanella pealeana (strain ATCC 700345 / ANG-SQ1).